Consider the following 393-residue polypeptide: MLRRLLERPCTLALLVGSQLAVMMYLSLGGFRSLSALFGRDQGPTFDYSHPRDVYSNLSHLPGAPGGPPAPQGLPYCPERSPLLVGPVSVSFSPVPSLAEIVERNPRVEPGGRYRPAGCEPRSRTAIIVPHRAREHHLRLLLYHLHPFLQRQQLAYGIYVIHQAGNGTFNRAKLLNVGVREALRDEEWDCLFLHDVDLLPENDHNLYVCDPRGPRHVAVAMNKFGYSLPYPQYFGGVSALTPDQYLKMNGFPNEYWGWGGEDDDIATRVRLAGMKISRPPTSVGHYKMVKHRGDKGNEENPHRFDLLVRTQNSWTQDGMNSLTYQLLARELGPLYTNITADIGTDPRGPRAPSGPRYPPGSSQAFRQEMLQRRPPARPGPLSTANHTALRGSH.

Residues 1 to 10 are Cytoplasmic-facing; that stretch reads MLRRLLERPC. The chain crosses the membrane as a helical; Signal-anchor for type II membrane protein span at residues 11–31; sequence TLALLVGSQLAVMMYLSLGGF. The Lumenal portion of the chain corresponds to 32-393; the sequence is RSLSALFGRD…ANHTALRGSH (362 aa). An N-linked (GlcNAc...) asparagine glycan is attached at Asn-57. A disulfide bridge connects residues Cys-77 and Cys-119. 130-134 provides a ligand contact to UDP-alpha-D-galactose; it reads PHRAR. Residue Asn-166 is glycosylated (N-linked (GlcNAc...) asparagine). UDP-alpha-D-galactose is bound by residues 169 to 171, 196 to 197, Tyr-226, and Trp-258; these read FNR and VD. Cys-190 and Cys-209 are disulfide-bonded. Asp-197 contacts Mn(2+). 260–263 contributes to the N-acetyl-D-glucosamine binding site; the sequence is GEDD. A Mn(2+)-binding site is contributed by His-291. Position 291 to 293 (291 to 293) interacts with UDP-alpha-D-galactose; it reads HRG. Arg-303 contacts N-acetyl-D-glucosamine. 2 N-linked (GlcNAc...) asparagine glycosylation sites follow: Asn-337 and Asn-385. Residues 339–393 are disordered; that stretch reads TADIGTDPRGPRAPSGPRYPPGSSQAFRQEMLQRRPPARPGPLSTANHTALRGSH.

Belongs to the glycosyltransferase 7 family. Mn(2+) serves as cofactor. In terms of tissue distribution, found in various tissues. Highest expression in placenta, prostate, testis, ovary, intestine and muscle, and in fetal brain.

The protein localises to the golgi apparatus. The protein resides in the golgi stack membrane. It carries out the reaction an N-acetyl-beta-D-glucosaminyl derivative + UDP-alpha-D-galactose = a beta-D-galactosyl-(1-&gt;4)-N-acetyl-beta-D-glucosaminyl derivative + UDP + H(+). The enzyme catalyses N-acetyl-D-glucosamine + UDP-alpha-D-galactose = beta-D-galactosyl-(1-&gt;4)-N-acetyl-D-glucosamine + UDP + H(+). The catalysed reaction is a beta-D-GlcNAc-(1-&gt;3)-beta-D-Gal-(1-&gt;4)-beta-D-Glc-(1&lt;-&gt;1)-Cer(d18:1(4E)) + UDP-alpha-D-galactose = a neolactoside nLc4Cer(d18:1(4E)) + UDP + H(+). It catalyses the reaction a beta-D-glucosylceramide + UDP-alpha-D-galactose = a beta-D-galactosyl-(1-&gt;4)-beta-D-glucosyl-(1&lt;-&gt;1)-ceramide + UDP + H(+). It carries out the reaction a neolactoside IV(3)-beta-GlcNAc-nLc4Cer + UDP-alpha-D-galactose = a neolactoside nLc6Cer + UDP + H(+). The protein operates within protein modification; protein glycosylation. Functionally, responsible for the synthesis of complex-type N-linked oligosaccharides in many glycoproteins as well as the carbohydrate moieties of glycolipids. The polypeptide is Beta-1,4-galactosyltransferase 3 (Homo sapiens (Human)).